The sequence spans 65 residues: Large ribosomal subunit protein bL35 (65 aa).

The protein belongs to the bacterial ribosomal protein bL35 family.

This chain is Large ribosomal subunit protein bL35, found in Nitrosomonas eutropha (strain DSM 101675 / C91 / Nm57).